Here is a 251-residue protein sequence, read N- to C-terminus: Triosephosphate isomerase (251 aa).

10–12 provides a ligand contact to substrate; that stretch reads NWK. His-98 functions as the Electrophile in the catalytic mechanism. Glu-169 functions as the Proton acceptor in the catalytic mechanism. Substrate-binding positions include Gly-175, Ser-213, and 234-235; that span reads GG.

Belongs to the triosephosphate isomerase family. In terms of assembly, homodimer.

It localises to the cytoplasm. The enzyme catalyses D-glyceraldehyde 3-phosphate = dihydroxyacetone phosphate. The protein operates within carbohydrate biosynthesis; gluconeogenesis. It functions in the pathway carbohydrate degradation; glycolysis; D-glyceraldehyde 3-phosphate from glycerone phosphate: step 1/1. Functionally, involved in the gluconeogenesis. Catalyzes stereospecifically the conversion of dihydroxyacetone phosphate (DHAP) to D-glyceraldehyde-3-phosphate (G3P). The chain is Triosephosphate isomerase from Paracidovorax citrulli (strain AAC00-1) (Acidovorax citrulli).